The sequence spans 270 residues: 27 kDa core protein (270 aa).

Belongs to the chordopoxvirinae D3 family.

The protein resides in the virion. Its function is as follows. Late protein which is part of a large complex required for early virion morphogenesis. This complex participates in the formation of virosomes and the incorporation of virosomal contents into nascent immature virions. This Vertebrata (FPV) protein is 27 kDa core protein.